The sequence spans 414 residues: Carboxynorspermidine synthase (414 aa).

The protein belongs to the saccharopine dehydrogenase family. Carboxynorspermidine synthase subfamily. In terms of assembly, homodimer.

The catalysed reaction is carboxynorspermidine + NADP(+) + H2O = L-aspartate 4-semialdehyde + propane-1,3-diamine + NADPH + H(+). It carries out the reaction carboxyspermidine + NADP(+) + H2O = L-aspartate 4-semialdehyde + putrescine + NADPH + H(+). Activated by dithiothreitol and inhibited by SH-reactive compounds. Functionally, involved in norspermidine biosynthesis. Catalyzes the synthesis of carboxynorspermidine from L-aspartate 4-semialdehyde and 1,3-diaminopropane. Is also slightly active with putrescine as a substrate. The polypeptide is Carboxynorspermidine synthase (Vibrio alginolyticus (strain ATCC 17749 / DSM 2171 / NBRC 15630 / NCIMB 1903 / NCTC 12160 / XII-53)).